Reading from the N-terminus, the 58-residue chain is Small ribosomal subunit protein bS21 (58 aa).

Residues 35–58 form a disordered region; sequence REHYESPSVRRKKKSEAARKRRYK. A compositionally biased stretch (basic residues) spans 43–58; it reads VRRKKKSEAARKRRYK.

It belongs to the bacterial ribosomal protein bS21 family.

This is Small ribosomal subunit protein bS21 from Acetivibrio thermocellus (strain ATCC 27405 / DSM 1237 / JCM 9322 / NBRC 103400 / NCIMB 10682 / NRRL B-4536 / VPI 7372) (Clostridium thermocellum).